A 154-amino-acid chain; its full sequence is MLKFSFLFLTVEKPGGLFDFDGTLPLIAIQFLILMFLLNILLYTPLLKIIDERSEYIANNLQEASIILNKANELSSQYEKEFSKIKKEVELDSLTLQNLHKNILEIEIISSQKIFENYLNQTINNFDSEKEKILTSLDEEINSLSSEIITKIVA.

A helical transmembrane segment spans residues 22-42 (GTLPLIAIQFLILMFLLNILL).

It belongs to the ATPase B chain family. F-type ATPases have 2 components, F(1) - the catalytic core - and F(0) - the membrane proton channel. F(1) has five subunits: alpha(3), beta(3), gamma(1), delta(1), epsilon(1). F(0) has four main subunits: a(1), b(1), b'(1) and c(10-14). The alpha and beta chains form an alternating ring which encloses part of the gamma chain. F(1) is attached to F(0) by a central stalk formed by the gamma and epsilon chains, while a peripheral stalk is formed by the delta, b and b' chains.

The protein resides in the plastid. Its subcellular location is the chloroplast thylakoid membrane. Functionally, f(1)F(0) ATP synthase produces ATP from ADP in the presence of a proton or sodium gradient. F-type ATPases consist of two structural domains, F(1) containing the extramembraneous catalytic core and F(0) containing the membrane proton channel, linked together by a central stalk and a peripheral stalk. During catalysis, ATP synthesis in the catalytic domain of F(1) is coupled via a rotary mechanism of the central stalk subunits to proton translocation. Its function is as follows. Component of the F(0) channel, it forms part of the peripheral stalk, linking F(1) to F(0). The b'-subunit is a diverged and duplicated form of b found in plants and photosynthetic bacteria. This is ATP synthase subunit b', chloroplastic from Vaucheria litorea (Yellow-green alga).